The sequence spans 199 residues: Recombination protein RecR (199 aa).

A C4-type zinc finger spans residues 57–72 (CSVCGNITEDDPCPIC). Positions 80–176 (SRVLVVERSR…KVTRLAHGLS (97 aa)) constitute a Toprim domain.

Belongs to the RecR family.

May play a role in DNA repair. It seems to be involved in an RecBC-independent recombinational process of DNA repair. It may act with RecF and RecO. This is Recombination protein RecR from Limosilactobacillus fermentum (strain NBRC 3956 / LMG 18251) (Lactobacillus fermentum).